Consider the following 297-residue polypeptide: Probable endonuclease 4 (297 aa).

Residues His69, His110, Glu145, Asp179, His182, His214, Asp227, His229, and Glu259 each coordinate Zn(2+).

Belongs to the AP endonuclease 2 family. Zn(2+) is required as a cofactor.

The enzyme catalyses Endonucleolytic cleavage to 5'-phosphooligonucleotide end-products.. Its function is as follows. Endonuclease IV plays a role in DNA repair. It cleaves phosphodiester bonds at apurinic or apyrimidinic (AP) sites, generating a 3'-hydroxyl group and a 5'-terminal sugar phosphate. The protein is Probable endonuclease 4 of Listeria monocytogenes serotype 4b (strain CLIP80459).